Here is a 206-residue protein sequence, read N- to C-terminus: Transmembrane emp24 domain-containing protein bai (206 aa).

The first 20 residues, 1–20 (MLKSLLCILLIFGCLCRIHG), serve as a signal peptide directing secretion. The Lumenal segment spans residues 21 to 172 (VMFHLTPNTQ…RDTNEKTNSR (152 aa)). A GOLD domain is found at 30–140 (QKCLKEDIQA…LKPLEVDLKR (111 aa)). Residues 173–193 (VLFFSIFSMCCLLGLATWQVL) traverse the membrane as a helical segment. Residues 194–206 (YLRRYFKAKKLIE) lie on the Cytoplasmic side of the membrane.

Belongs to the EMP24/GP25L family.

It localises to the membrane. In terms of biological role, eca and bai are essential, though not redundant, for dorsoventral patterning of the embryo. Specifically required during early embryogenesis for the activity of maternal tkv, while the zygotic tkv is not affected. This is Transmembrane emp24 domain-containing protein bai from Drosophila grimshawi (Hawaiian fruit fly).